Here is a 466-residue protein sequence, read N- to C-terminus: Probable aminotransferase Rv3329 (466 aa).

Lys-294 is subject to N6-(pyridoxal phosphate)lysine.

It belongs to the class-III pyridoxal-phosphate-dependent aminotransferase family. Requires pyridoxal 5'-phosphate as cofactor.

Functionally, probable aminotransferase. In Mycobacterium tuberculosis (strain ATCC 25618 / H37Rv), this protein is Probable aminotransferase Rv3329.